A 2215-amino-acid chain; its full sequence is Unconventional myosin-VIIa (2215 aa).

The Myosin motor domain maps to 65–741 (HGVEDMIRLG…HDMLLEVERD (677 aa)). Residue 158-165 (GESGAGKT) participates in ATP binding. The interval 632–639 (FVRCIKPN) is actin-binding. IQ domains follow at residues 745 to 765 (TDRV…SNFL), 768 to 788 (KSAA…KNYE), 791 to 811 (RLGF…KQYR), 814 to 834 (RQRI…KAFR), and 837 to 857 (LWAV…RLHR). The SAH stretch occupies residues 858–935 (RLRVEYQRRL…LEQMEKARHE (78 aa)). A MyTH4 1 domain is found at 1017 to 1253 (YTRRPLKQPL…PSWLELQATK (237 aa)). The region spanning 1258–1602 (IMLPVTFMDG…LVVTFLEGLR (345 aa)) is the FERM 1 domain. Thr1563 carries the phosphothreonine modification. Ser1569 carries the phosphoserine modification. Position 1571 is a phosphothreonine (Thr1571). An SH3 domain is found at 1603 to 1672 (KRSKYVVALQ…PTDCVYVMPT (70 aa)). The region spanning 1747-1896 (HTREPLKQAL…PHLVEVEAIQ (150 aa)) is the MyTH4 2 domain. Residues 1902–2205 (IFHKVYFPDD…SYISQMLTAM (304 aa)) enclose the FERM 2 domain.

Belongs to the TRAFAC class myosin-kinesin ATPase superfamily. Myosin family. As to quaternary structure, might homodimerize in a two headed molecule through the formation of a coiled-coil rod. Identified in a complex with USH1C and USH1G. Interacts with MYRIP. Interacts with RPE65. Interacts with CIB2. May interact with CALM. Interacts with WHRN. Interacts with PLEKHB1 (via PH domain). Interacts with PCDH15. Interacts with TWF2. Interacts with USH1G. Interacts with MYH9. Interacts (via MyTH4-FERM domains) with cytoplasmic regions of ADGRV1 and USH2A. Interacts with PDZD7 (via MyTH4-FERM domains). Interacts with CALML4. Detected in mechanosensory stereocilia of cochlea hair cells (at protein level). Expressed in the retina, cochlea, kidney and liver.

Its subcellular location is the cytoplasm. It is found in the cell cortex. The protein localises to the cytoskeleton. It localises to the synapse. In terms of biological role, myosins are actin-based motor molecules with ATPase activity. Unconventional myosins serve in intracellular movements. Their highly divergent tails bind to membranous compartments, which are then moved relative to actin filaments. In the retina, plays an important role in the renewal of the outer photoreceptor disks. Plays an important role in the distribution and migration of retinal pigment epithelial (RPE) melanosomes and phagosomes, and in the regulation of opsin transport in retinal photoreceptors. Mediates intracellular transport of RPE65 in the retina pigment epithelium. In the inner ear, plays an important role in differentiation, morphogenesis and organization of cochlear hair cell bundles. Motor protein that is a part of the functional network formed by USH1C, USH1G, CDH23 and MYO7A that mediates mechanotransduction in cochlear hair cells. Required for normal hearing. Involved in hair-cell vesicle trafficking of aminoglycosides, which are known to induce ototoxicity. This is Unconventional myosin-VIIa (Myo7a) from Mus musculus (Mouse).